A 471-amino-acid chain; its full sequence is Eukaryotic translation initiation factor 3 subunit M (471 aa).

A disordered region spans residues 39–61; the sequence is EISSLLEPLRQQEQSEEEPDRKQ. Positions 206 to 377 constitute a PCI domain; it reads DFELAQSHVV…SEFLVHRATY (172 aa). A disordered region spans residues 419–471; it reads QAATEEANQGKSGEKGGKGGDRRRNPQHQQQQQQSQPSQPQQPRETELVAGAE. A compositionally biased stretch (basic and acidic residues) spans 430-442; that stretch reads SGEKGGKGGDRRR. Residues 445-461 show a composition bias toward low complexity; sequence QHQQQQQQSQPSQPQQP.

This sequence belongs to the eIF-3 subunit M family. As to quaternary structure, component of the eukaryotic translation initiation factor 3 (eIF-3) complex.

It localises to the cytoplasm. Component of the eukaryotic translation initiation factor 3 (eIF-3) complex, which is involved in protein synthesis of a specialized repertoire of mRNAs and, together with other initiation factors, stimulates binding of mRNA and methionyl-tRNAi to the 40S ribosome. The eIF-3 complex specifically targets and initiates translation of a subset of mRNAs involved in cell proliferation. The sequence is that of Eukaryotic translation initiation factor 3 subunit M from Aspergillus clavatus (strain ATCC 1007 / CBS 513.65 / DSM 816 / NCTC 3887 / NRRL 1 / QM 1276 / 107).